The following is a 189-amino-acid chain: Peptidyl-tRNA hydrolase (189 aa).

Y15 is a tRNA binding site. The active-site Proton acceptor is the H20. 3 residues coordinate tRNA: F66, N68, and N114.

It belongs to the PTH family. In terms of assembly, monomer.

It is found in the cytoplasm. It catalyses the reaction an N-acyl-L-alpha-aminoacyl-tRNA + H2O = an N-acyl-L-amino acid + a tRNA + H(+). Its function is as follows. Hydrolyzes ribosome-free peptidyl-tRNAs (with 1 or more amino acids incorporated), which drop off the ribosome during protein synthesis, or as a result of ribosome stalling. In terms of biological role, catalyzes the release of premature peptidyl moieties from peptidyl-tRNA molecules trapped in stalled 50S ribosomal subunits, and thus maintains levels of free tRNAs and 50S ribosomes. This Streptococcus pneumoniae serotype 2 (strain D39 / NCTC 7466) protein is Peptidyl-tRNA hydrolase.